The primary structure comprises 182 residues: Small ribosomal subunit protein uS4c (182 aa).

Residues 82–143 (MRLDNILFRL…KERSKVLIQN (62 aa)) form the S4 RNA-binding domain.

It belongs to the universal ribosomal protein uS4 family. As to quaternary structure, part of the 30S ribosomal subunit. Contacts protein S5. The interaction surface between S4 and S5 is involved in control of translational fidelity.

Its subcellular location is the plastid. The protein resides in the chloroplast. In terms of biological role, one of the primary rRNA binding proteins, it binds directly to 16S rRNA where it nucleates assembly of the body of the 30S subunit. Functionally, with S5 and S12 plays an important role in translational accuracy. In Neomarica sp. (strain Lejeune 1997), this protein is Small ribosomal subunit protein uS4c (rps4).